Here is a 165-residue protein sequence, read N- to C-terminus: Protein SprT (165 aa).

Positions 22-163 (LAQANLKLDR…RCVHCGEPLV (142 aa)) constitute a SprT-like domain. H78 is a Zn(2+) binding site. E79 is an active-site residue. Residue H82 coordinates Zn(2+).

Belongs to the SprT family. Requires Zn(2+) as cofactor.

It is found in the cytoplasm. The protein is Protein SprT of Salmonella agona (strain SL483).